The following is a 391-amino-acid chain: Apolipoprotein A-IV (391 aa).

An N-terminal signal peptide occupies residues 1–20 (MFLKAVVLTVALVAITGTQA). 13 tandem repeats follow at residues 33-54 (DYFT…KTDV), 60-81 (TLFQ…NKLV), 82-103 (PFAV…EEIQ), 115-136 (PHAN…EHLR), 137-158 (PYAT…RQLT), 159-180 (PYIQ…SSMV), 181-202 (PFAN…GQLT), 203-224 (PRAN…SRLA), 225-246 (PLAE…FQMK), 247-268 (KNAE…KNLA), 269-286 (PLVE…EGLQ), 287-308 (KSLE…RAVE), and 309-330 (PLGD…QQLG). The interval 33 to 330 (DYFTQLSNNA…QMEKFRQQLG (298 aa)) is 13 X 22 AA approximate tandem repeats. At S333 the chain carries Phosphoserine. Positions 354–391 (FMSTLQKKGSPDQPLALPLPEQVQEQVQEQVQPKPLES) are disordered. Residues 371–391 (PLPEQVQEQVQEQVQPKPLES) show a composition bias toward low complexity.

It belongs to the apolipoprotein A1/A4/E family. As to quaternary structure, homodimer. Secreted in plasma.

It is found in the secreted. In terms of biological role, may have a role in chylomicrons and VLDL secretion and catabolism. Required for efficient activation of lipoprotein lipase by ApoC-II; potent activator of LCAT. Apoa-IV is a major component of HDL and chylomicrons. The sequence is that of Apolipoprotein A-IV (Apoa4) from Rattus norvegicus (Rat).